The sequence spans 167 residues: Large ribosomal subunit protein uL10 (167 aa).

This sequence belongs to the universal ribosomal protein uL10 family. Part of the ribosomal stalk of the 50S ribosomal subunit. The N-terminus interacts with L11 and the large rRNA to form the base of the stalk. The C-terminus forms an elongated spine to which L12 dimers bind in a sequential fashion forming a multimeric L10(L12)X complex.

Functionally, forms part of the ribosomal stalk, playing a central role in the interaction of the ribosome with GTP-bound translation factors. This is Large ribosomal subunit protein uL10 from Mycoplasma mobile (strain ATCC 43663 / 163K / NCTC 11711) (Mesomycoplasma mobile).